The primary structure comprises 309 residues: Phosphoserine phosphatase (309 aa).

The active-site Nucleophile is aspartate 97. The Mg(2+) site is built by aspartate 97 and aspartate 99. The active-site Proton donor is aspartate 99. Residues glutamate 106, arginine 142, 186–187 (SG), and lysine 232 contribute to the substrate site. Aspartate 255 is a Mg(2+) binding site. Asparagine 258 serves as a coordination point for substrate.

The protein belongs to the HAD-like hydrolase superfamily. SerB family. Requires Mg(2+) as cofactor.

The catalysed reaction is O-phospho-L-serine + H2O = L-serine + phosphate. It carries out the reaction O-phospho-D-serine + H2O = D-serine + phosphate. It participates in amino-acid biosynthesis; L-serine biosynthesis; L-serine from 3-phospho-D-glycerate: step 3/3. This is Phosphoserine phosphatase (SER2) from Saccharomyces cerevisiae (strain ATCC 204508 / S288c) (Baker's yeast).